The primary structure comprises 420 residues: Gamma-glutamyl phosphate reductase (420 aa).

It belongs to the gamma-glutamyl phosphate reductase family.

It localises to the cytoplasm. It carries out the reaction L-glutamate 5-semialdehyde + phosphate + NADP(+) = L-glutamyl 5-phosphate + NADPH + H(+). Its pathway is amino-acid biosynthesis; L-proline biosynthesis; L-glutamate 5-semialdehyde from L-glutamate: step 2/2. Functionally, catalyzes the NADPH-dependent reduction of L-glutamate 5-phosphate into L-glutamate 5-semialdehyde and phosphate. The product spontaneously undergoes cyclization to form 1-pyrroline-5-carboxylate. The polypeptide is Gamma-glutamyl phosphate reductase (Streptococcus pneumoniae (strain ATCC 700669 / Spain 23F-1)).